Reading from the N-terminus, the 241-residue chain is Large ribosomal subunit protein bL25 (241 aa).

The segment at 214 to 241 (LDAVKAGEEGSRAQQETEEASERADQGQ) is disordered.

This sequence belongs to the bacterial ribosomal protein bL25 family. CTC subfamily. Part of the 50S ribosomal subunit; part of the 5S rRNA/L5/L18/L25 subcomplex. Contacts the 5S rRNA. Binds to the 5S rRNA independently of L5 and L18.

Its function is as follows. This is one of the proteins that binds to the 5S RNA in the ribosome where it forms part of the central protuberance. The polypeptide is Large ribosomal subunit protein bL25 (Deinococcus geothermalis (strain DSM 11300 / CIP 105573 / AG-3a)).